Reading from the N-terminus, the 471-residue chain is Alpha-galactosidase (471 aa).

The N-terminal stretch at 1–18 (MFLLYLFTSFAAVSGVLG) is a signal peptide. Cysteines 42 and 74 form a disulfide. Aspartate 72 and aspartate 73 together coordinate substrate. An N-linked (GlcNAc...) asparagine glycan is attached at asparagine 82. Cysteine 121 and cysteine 151 form a disulfide bridge. Lysine 147 provides a ligand contact to substrate. The active-site Nucleophile is the aspartate 149. A glycan (N-linked (GlcNAc...) asparagine) is linked at asparagine 175. Substrate is bound at residue arginine 205. The active-site Proton donor is aspartate 209. Intrachain disulfides connect cysteine 221–cysteine 237 and cysteine 223–cysteine 230. Residue glutamine 251 participates in substrate binding. 7 N-linked (GlcNAc...) asparagine glycosylation sites follow: asparagine 270, asparagine 403, asparagine 412, asparagine 417, asparagine 422, asparagine 435, and asparagine 454.

This sequence belongs to the glycosyl hydrolase 27 family. Homotetramer.

The protein localises to the secreted. It catalyses the reaction Hydrolysis of terminal, non-reducing alpha-D-galactose residues in alpha-D-galactosides, including galactose oligosaccharides, galactomannans and galactolipids.. The polypeptide is Alpha-galactosidase (MEL) (Saccharomyces pastorianus (strain ATCC 76529 / Carlsberg bottom yeast no.1 / CBS 1513 / CLIB 176 / NBRC 1167 / NCYC 396 / NRRL Y-12693) (Saaz-type lager yeast)).